Here is a 1233-residue protein sequence, read N- to C-terminus: Anion exchange protein 3 (1233 aa).

Residues 1–11 show a composition bias toward pro residues; sequence MANGVIPPPGG. Disordered stretches follow at residues 1–320 and 431–500; these read MANG…RRPH and DDKD…DGHR. The Cytoplasmic portion of the chain corresponds to 1-709; sequence MANGVIPPPG…DLRDALHSQC (709 aa). The span at 58–73 shows a compositional bias: basic and acidic residues; that stretch reads DPEKPSRSFSERDFAF. 2 stretches are compositionally biased toward basic residues: residues 74–97 and 104–113; these read HRHI…KLRR and RHTRRKRKKE. Acidic residues predominate over residues 137–153; that stretch reads GEEEEEEEEEGESETEA. Serine 168, serine 171, serine 176, and serine 199 each carry phosphoserine. Over residues 201–216 the composition is skewed to low complexity; that stretch reads QRSVSSSSPRARAPRV. Residues 268–290 show a composition bias toward basic and acidic residues; the sequence is DDMKSHRLEDNPGVRRHLVKEPS. The residue at position 296 (arginine 296) is an Omega-N-methylarginine. Low complexity predominate over residues 437 to 450; sequence SFPRNPSSSSVNSV. The segment covering 482–500 has biased composition (basic and acidic residues); that stretch reads HDPDAKERPLHMPGGDGHR. The next 4 helical transmembrane spans lie at 710–732, 738–775, 795–817, and 827–848; these read VAAV…GLLG, LMGV…LLVF, VWVG…TFLV, and IFAF…YKVF. A membrane (anion exchange) region spans residues 710–1233; the sequence is VAAVLFIYFA…DEYNELHMPV (524 aa). An N-linked (GlcNAc...) asparagine glycan is attached at asparagine 874. The helical transmembrane segment at 894–911 threads the bilayer; that stretch reads ALLSLILMLGTFLIAFFL. At 912–926 the chain is on the cytoplasmic side; sequence RKFRNSRFLGGKARR. 5 helical membrane passes run 927 to 947, 981 to 1003, 1029 to 1050, 1084 to 1129, and 1156 to 1192; these read IIGD…DYSI, PFPP…LIFM, LLLI…LTAA, VTGV…IQLS, and MHLF…TVPL. A lipid anchor (S-palmitoyl cysteine) is attached at cysteine 1166.

This sequence belongs to the anion exchanger (TC 2.A.31) family.

The protein localises to the cell membrane. The catalysed reaction is hydrogencarbonate(in) + chloride(out) = hydrogencarbonate(out) + chloride(in). Sodium-independent anion exchanger which mediates the electroneutral exchange of chloride for bicarbonate ions across the cell membrane. May be involved in the regulation of intracellular pH, and the modulation of cardiac action potential. This is Anion exchange protein 3 (SLC4A3) from Oryctolagus cuniculus (Rabbit).